We begin with the raw amino-acid sequence, 265 residues long: Hydroxyethylthiazole kinase (265 aa).

Position 36 (M36) interacts with substrate. Positions 112 and 160 each coordinate ATP. G187 is a substrate binding site.

Belongs to the Thz kinase family. Mg(2+) is required as a cofactor.

The catalysed reaction is 5-(2-hydroxyethyl)-4-methylthiazole + ATP = 4-methyl-5-(2-phosphooxyethyl)-thiazole + ADP + H(+). The protein operates within cofactor biosynthesis; thiamine diphosphate biosynthesis; 4-methyl-5-(2-phosphoethyl)-thiazole from 5-(2-hydroxyethyl)-4-methylthiazole: step 1/1. In terms of biological role, catalyzes the phosphorylation of the hydroxyl group of 4-methyl-5-beta-hydroxyethylthiazole (THZ). This chain is Hydroxyethylthiazole kinase, found in Clostridium perfringens (strain 13 / Type A).